A 291-amino-acid polypeptide reads, in one-letter code: Probable L-ascorbate peroxidase 4, peroxisomal (291 aa).

The Proton acceptor role is filled by histidine 40. Histidine 160 is a binding site for heme b. K(+) contacts are provided by threonine 161, threonine 177, and aspartate 184. The chain crosses the membrane as a helical span at residues 263-283 (VLAQSAVGVAVAAAVVIVSYL).

It belongs to the peroxidase family. Ascorbate peroxidase subfamily. It depends on heme b as a cofactor. As to expression, expressed in leaves, stems and flowers.

It is found in the peroxisome membrane. It catalyses the reaction L-ascorbate + H2O2 = L-dehydroascorbate + 2 H2O. Functionally, plays a key role in hydrogen peroxide removal. The protein is Probable L-ascorbate peroxidase 4, peroxisomal of Oryza sativa subsp. japonica (Rice).